Here is a 353-residue protein sequence, read N- to C-terminus: DNA integrity scanning protein DisA (353 aa).

Positions Asp-6–Ser-144 constitute a DAC domain. Residues Gly-73, Leu-91, and Thr-104–Thr-108 contribute to the ATP site.

This sequence belongs to the DisA family. As to quaternary structure, homooctamer. Mg(2+) serves as cofactor.

It carries out the reaction 2 ATP = 3',3'-c-di-AMP + 2 diphosphate. In terms of biological role, participates in a DNA-damage check-point that is active prior to asymmetric division when DNA is damaged. DisA forms globular foci that rapidly scan along the chromosomes during sporulation, searching for lesions. When a lesion is present, DisA pauses at the lesion site. This triggers a cellular response that culminates in a temporary block in sporulation initiation. Functionally, also has diadenylate cyclase activity, catalyzing the condensation of 2 ATP molecules into cyclic di-AMP (c-di-AMP). c-di-AMP acts as a signaling molecule that couples DNA integrity with progression of sporulation. The rise in c-di-AMP level generated by DisA while scanning the chromosome, operates as a positive signal that advances sporulation; upon encountering a lesion, the DisA focus arrests at the damaged site and halts c-di-AMP synthesis. The protein is DNA integrity scanning protein DisA of Clostridium botulinum (strain 657 / Type Ba4).